A 972-amino-acid polypeptide reads, in one-letter code: Mast/stem cell growth factor receptor Kit (972 aa).

The N-terminal stretch at 1–25 is a signal peptide; it reads MRGARRAWDFLFVLQLLLRVQTGSS. At 26–520 the chain is on the extracellular side; it reads QPSVSPEELS…QIHAHTLFTP (495 aa). Ig-like C2-type domains lie at 27–112, 121–205, 212–308, 317–410, and 413–507; these read PSVS…VFVR, DPPL…LKVR, PVVA…LEVV, PMMN…VYVN, and PEIL…FNFA. 4 cysteine pairs are disulfide-bonded: cysteine 58–cysteine 97, cysteine 136–cysteine 186, cysteine 151–cysteine 183, and cysteine 233–cysteine 290. 2 N-linked (GlcNAc...) asparagine glycosylation sites follow: asparagine 94 and asparagine 145. N-linked (GlcNAc...) asparagine glycans are attached at residues asparagine 283, asparagine 293, asparagine 300, asparagine 320, asparagine 352, asparagine 367, asparagine 400, asparagine 463, and asparagine 486. Cysteine 428 and cysteine 491 are disulfide-bonded. Residues 521–541 form a helical membrane-spanning segment; sequence LLIGFVIAAGMMCIIVMILTY. Topologically, residues 542–972 are cytoplasmic; it reads KYLQKPMYEV…TQPLLVHEDV (431 aa). Tyrosine 543, tyrosine 549, tyrosine 564, and tyrosine 566 each carry phosphotyrosine; by autocatalysis. Mg(2+) is bound at residue tyrosine 564. The interval 564-566 is important for interaction with phosphotyrosine-binding proteins; that stretch reads YVY. One can recognise a Protein kinase domain in the interval 585 to 933; sequence LSFGKTLGAG…ISESTNHIYS (349 aa). ATP contacts are provided by residues 592–599, lysine 619, and 667–673; these read GAGAFGKV and EYCCYGD. 3 positions are modified to phosphotyrosine; by autocatalysis: tyrosine 699, tyrosine 717, and tyrosine 726. Phosphoserine; by PKC/PRKCA occurs at positions 737 and 742. Aspartate 788 (proton acceptor) is an active-site residue. Position 792 (arginine 792) interacts with ATP. Asparagine 793 and aspartate 806 together coordinate Mg(2+). Residue serine 817 is modified to Phosphoserine. Residue tyrosine 819 is modified to Phosphotyrosine; by autocatalysis. Serine 887 is subject to Phosphoserine. 2 positions are modified to phosphotyrosine; by autocatalysis: tyrosine 896 and tyrosine 932. The residue at position 955 (serine 955) is a Phosphoserine.

Belongs to the protein kinase superfamily. Tyr protein kinase family. CSF-1/PDGF receptor subfamily. As to quaternary structure, monomer in the absence of bound KITLG/SCF. Homodimer in the presence of bound KITLG/SCF, forming a heterotetramer with two KITLG/SCF molecules. Interacts (via phosphorylated tyrosine residues) with the adapter proteins GRB2 and GRB7 (via SH2 domain), and SH2B2/APS. Interacts (via C-terminus) with MPDZ (via the tenth PDZ domain). Interacts (via phosphorylated tyrosine residues) with PIK3R1 and PIK3 catalytic subunit. Interacts (via phosphorylated tyrosine) with CRK (isoform Crk-II), FYN, SHC1 and MATK/CHK (via SH2 domain). Interacts with LYN and FES/FPS. Interacts (via phosphorylated tyrosine residues) with the protein phosphatases PTPN6/SHP-1 (via SH2 domain), PTPN11/SHP-2 (via SH2 domain) and PTPRU. Interacts with PLCG1. Interacts with DOK1 and TEC. Interacts with IL1RAP (independent of stimulation with KITLG/SCF). A mast cell-specific KITLG/SCF-induced interleukin-33 signaling complex contains IL1RL1, IL1RAP, KIT and MYD88. Post-translationally, ubiquitinated by SOCS6. KIT is rapidly ubiquitinated after autophosphorylation induced by KITLG/SCF binding, leading to internalization and degradation. In terms of processing, autophosphorylated on tyrosine residues. KITLG/SCF binding promotes autophosphorylation. Phosphorylated tyrosine residues are important for interaction with specific binding partners.

The protein localises to the cell membrane. It carries out the reaction L-tyrosyl-[protein] + ATP = O-phospho-L-tyrosyl-[protein] + ADP + H(+). With respect to regulation, present in an inactive conformation in the absence of bound ligand. KITLG/SCF binding leads to dimerization and activation by autophosphorylation on tyrosine residues. Activity is down-regulated by PRKCA-mediated phosphorylation on serine residues. Its function is as follows. Tyrosine-protein kinase that acts as a cell-surface receptor for the cytokine KITLG/SCF and plays an essential role in the regulation of cell survival and proliferation, hematopoiesis, stem cell maintenance, gametogenesis, mast cell development, migration and function, and in melanogenesis. In response to KITLG/SCF binding, KIT can activate several signaling pathways. Phosphorylates PIK3R1, PLCG1, SH2B2/APS and CBL. Activates the AKT1 signaling pathway by phosphorylation of PIK3R1, the regulatory subunit of phosphatidylinositol 3-kinase. Activated KIT also transmits signals via GRB2 and activation of RAS, RAF1 and the MAP kinases MAPK1/ERK2 and/or MAPK3/ERK1. Promotes activation of STAT family members STAT1, STAT3, STAT5A and STAT5B. Activation of PLCG1 leads to the production of the cellular signaling molecules diacylglycerol and inositol 1,4,5-trisphosphate. KIT signaling is modulated by protein phosphatases, and by rapid internalization and degradation of the receptor. Activated KIT promotes phosphorylation of the protein phosphatases PTPN6/SHP-1 and PTPRU, and of the transcription factors STAT1, STAT3, STAT5A and STAT5B. Promotes phosphorylation of PIK3R1, CBL, CRK (isoform Crk-II), LYN, MAPK1/ERK2 and/or MAPK3/ERK1, PLCG1, SRC and SHC1. The protein is Mast/stem cell growth factor receptor Kit (KIT) of Sus scrofa (Pig).